The chain runs to 250 residues: Orotidine 5'-phosphate decarboxylase (250 aa).

Residues D9, K40, 67 to 76, T132, R190, Q204, G224, and R225 contribute to the substrate site; that span reads DLKFHDIPNT. The active-site Proton donor is the K69.

It belongs to the OMP decarboxylase family. Type 1 subfamily. Homodimer.

It catalyses the reaction orotidine 5'-phosphate + H(+) = UMP + CO2. It participates in pyrimidine metabolism; UMP biosynthesis via de novo pathway; UMP from orotate: step 2/2. In terms of biological role, catalyzes the decarboxylation of orotidine 5'-monophosphate (OMP) to uridine 5'-monophosphate (UMP). The protein is Orotidine 5'-phosphate decarboxylase of Nitratidesulfovibrio vulgaris (strain DSM 19637 / Miyazaki F) (Desulfovibrio vulgaris).